A 2541-amino-acid chain; its full sequence is Talin-1 (2541 aa).

In terms of domain architecture, FERM spans 86–403 (RPLKIRMLDG…GYIDIILKKK (318 aa)). The interval 280–435 (FMAHKNCGNM…PKKSTVLQQQ (156 aa)) is interaction with LAYN. Residues 482-655 (RGHMPPLTSA…QTSGELLQQI (174 aa)) form a helical bundle R1 region. The interval 656–786 (GESDTDPRFQ…ALNDLLQHIK (131 aa)) is helical bundle R2. The tract at residues 787-911 (QHATGGQPIG…NAAAQNAIKK (125 aa)) is helical bundle R3. Residues 913–1043 (LVHKLEHAAK…RTAAQKAQEA (131 aa)) form a helical bundle R4 region. The interval 1045–1205 (GPLEIDSALG…NRCVNCLPGQ (161 aa)) is helical bundle R5. Positions 1206–1356 (RDVDAAIRMV…QLITMCTQQA (151 aa)) are helical bundle R6. Positions 1357–1452 (PGQKECDNAL…AYLVGVSDPN (96 aa)) are helical bundle R7A. Positions 1358-1658 (GQKECDNALR…NMRDKAPGQR (301 aa)) are interaction with VCL and F-actin. Residues 1460-1579 (LVDPTQFARA…NLTAFASNPE (120 aa)) are helical bundle R8. O-linked (GlcNAc) threonine glycosylation occurs at Thr1486. A helical bundle R7B region spans residues 1580–1652 (FATVPAQISP…IKKLITNMRD (73 aa)). The helical bundle R9 stretch occupies residues 1654–1821 (APGQRECDEA…TLNEAASAAG (168 aa)). A helical bundle R10 region spans residues 1822–1972 (VVGGMVDSIT…VLAALQAGNR (151 aa)). A glycan (O-linked (GlcNAc) threonine) is linked at Thr1889. The helical bundle R11 stretch occupies residues 1973–2139 (GTQACITAAS…TVKAVEDEAT (167 aa)). The helical bundle R12 stretch occupies residues 2140-2293 (KGTRALEATI…QAAEAMKGTE (154 aa)). Residues 2292–2531 (TEWVDPEDPT…MIRQQQYKFL (240 aa)) form the I/LWEQ domain. The helical bundle R13 stretch occupies residues 2299–2481 (DPTVIAENEL…AAQKAAAFQD (183 aa)).

As to quaternary structure, interacts with PIP5K1C and NRAP. Binds with high affinity to vinculin VCL and with low affinity to integrins. Interacts with APBB1IP; this inhibits VCL binding. Interacts with F-actin. Interacts with LAYN. Interacts with THSD1. Phosphorylated.

The protein localises to the cell projection. It is found in the ruffle membrane. Its subcellular location is the cytoplasm. The protein resides in the cytoskeleton. It localises to the cell surface. The protein localises to the cell junction. It is found in the focal adhesion. Functionally, high molecular weight cytoskeletal protein concentrated at regions of cell-substratum contact and, in lymphocytes, at cell-cell contacts. Involved in connections of major cytoskeletal structures to the plasma membrane. This chain is Talin-1 (TLN1), found in Gallus gallus (Chicken).